A 181-amino-acid polypeptide reads, in one-letter code: Adenine phosphoribosyltransferase (181 aa).

Belongs to the purine/pyrimidine phosphoribosyltransferase family. Homodimer.

Its subcellular location is the cytoplasm. It catalyses the reaction AMP + diphosphate = 5-phospho-alpha-D-ribose 1-diphosphate + adenine. The protein operates within purine metabolism; AMP biosynthesis via salvage pathway; AMP from adenine: step 1/1. Catalyzes a salvage reaction resulting in the formation of AMP, that is energically less costly than de novo synthesis. This is Adenine phosphoribosyltransferase from Brucella suis (strain ATCC 23445 / NCTC 10510).